We begin with the raw amino-acid sequence, 355 residues long: MIETDKLAAERIIAATPASSHEEVFERALRPRQLDDYVGQEKVRGQLEIFIEAAKRRREPLDHVLLFGPPGLGKTTLAHIIAREMGVNLRQTSGPVLERAGDLAALLTNLEANDVLFIDEIHRLSPVVEEILYPALEDYQIDIMIGEGPAARSVKLDLQPFTLVGATTRAGMLTNPLRDRFGIVARLEFYDADQLSRIVQRSASLLNAQIDPNGALEIAKRSRGTPRIANRLLRRVRDYAEVKADGQITAAIADAALAMLDVDPVGFDLMDRKLLEAILHKFDGGPVGIDNLAAAIGEERDTIEDVLEPYLIQQGFLQRTPRGRVATLLTYRHFGLAAPDAGSPVQSIWDTPDAQ.

Residues 4–190 are large ATPase domain (RuvB-L); it reads TDKLAAERII…FGIVARLEFY (187 aa). ATP-binding positions include leucine 29, arginine 30, glycine 71, lysine 74, threonine 75, threonine 76, 137-139, arginine 180, tyrosine 190, and arginine 227; that span reads EDY. Threonine 75 contacts Mg(2+). A small ATPAse domain (RuvB-S) region spans residues 191-261; the sequence is DADQLSRIVQ…IADAALAMLD (71 aa). Positions 264–355 are head domain (RuvB-H); the sequence is PVGFDLMDRK…QSIWDTPDAQ (92 aa). DNA contacts are provided by arginine 300, arginine 319, and arginine 324.

It belongs to the RuvB family. Homohexamer. Forms an RuvA(8)-RuvB(12)-Holliday junction (HJ) complex. HJ DNA is sandwiched between 2 RuvA tetramers; dsDNA enters through RuvA and exits via RuvB. An RuvB hexamer assembles on each DNA strand where it exits the tetramer. Each RuvB hexamer is contacted by two RuvA subunits (via domain III) on 2 adjacent RuvB subunits; this complex drives branch migration. In the full resolvosome a probable DNA-RuvA(4)-RuvB(12)-RuvC(2) complex forms which resolves the HJ.

The protein localises to the cytoplasm. The catalysed reaction is ATP + H2O = ADP + phosphate + H(+). The RuvA-RuvB-RuvC complex processes Holliday junction (HJ) DNA during genetic recombination and DNA repair, while the RuvA-RuvB complex plays an important role in the rescue of blocked DNA replication forks via replication fork reversal (RFR). RuvA specifically binds to HJ cruciform DNA, conferring on it an open structure. The RuvB hexamer acts as an ATP-dependent pump, pulling dsDNA into and through the RuvAB complex. RuvB forms 2 homohexamers on either side of HJ DNA bound by 1 or 2 RuvA tetramers; 4 subunits per hexamer contact DNA at a time. Coordinated motions by a converter formed by DNA-disengaged RuvB subunits stimulates ATP hydrolysis and nucleotide exchange. Immobilization of the converter enables RuvB to convert the ATP-contained energy into a lever motion, pulling 2 nucleotides of DNA out of the RuvA tetramer per ATP hydrolyzed, thus driving DNA branch migration. The RuvB motors rotate together with the DNA substrate, which together with the progressing nucleotide cycle form the mechanistic basis for DNA recombination by continuous HJ branch migration. Branch migration allows RuvC to scan DNA until it finds its consensus sequence, where it cleaves and resolves cruciform DNA. The polypeptide is Holliday junction branch migration complex subunit RuvB (Burkholderia multivorans (strain ATCC 17616 / 249)).